The sequence spans 71 residues: Pro-glucagon (71 aa).

The protein belongs to the glucagon family.

The protein localises to the secreted. Its function is as follows. Plays a key role in glucose metabolism and homeostasis. Regulates blood glucose by increasing gluconeogenesis and decreasing glycolysis. The sequence is that of Pro-glucagon (gcg) from Piaractus mesopotamicus (Small-scaled pacu).